A 284-amino-acid chain; its full sequence is 2-dehydro-3-deoxyphosphooctonate aldolase (284 aa).

It belongs to the KdsA family.

The protein resides in the cytoplasm. It carries out the reaction D-arabinose 5-phosphate + phosphoenolpyruvate + H2O = 3-deoxy-alpha-D-manno-2-octulosonate-8-phosphate + phosphate. Its pathway is carbohydrate biosynthesis; 3-deoxy-D-manno-octulosonate biosynthesis; 3-deoxy-D-manno-octulosonate from D-ribulose 5-phosphate: step 2/3. It participates in bacterial outer membrane biogenesis; lipopolysaccharide biosynthesis. The polypeptide is 2-dehydro-3-deoxyphosphooctonate aldolase (Salmonella enteritidis PT4 (strain P125109)).